A 1192-amino-acid chain; its full sequence is DNA topoisomerase 2 (1192 aa).

ATP is bound by residues Asn64, Asn95, and 142-149 (GTNGVGLK). Residues Glu438, Asp539, and Asp541 each contribute to the Mg(2+) site. Positions 707-1174 (IPNFLDGMTR…PGASVWLEEI (468 aa)) constitute a Topo IIA-type catalytic domain. Residue Tyr800 is the O-(5'-phospho-DNA)-tyrosine intermediate of the active site.

This sequence belongs to the type II topoisomerase family. Requires Mg(2+) as cofactor. The cofactor is Mn(2+). It depends on Ca(2+) as a cofactor.

Its subcellular location is the host cytoplasm. It catalyses the reaction ATP-dependent breakage, passage and rejoining of double-stranded DNA.. Type II topoisomerase. Processively relaxes supercoiled DNA. Displays DNA-supercoiling activity only when associated with the viral histone-like protein. This is DNA topoisomerase 2 from African swine fever virus (isolate Tick/South Africa/Pretoriuskop Pr4/1996) (ASFV).